Here is a 126-residue protein sequence, read N- to C-terminus: Holo-[acyl-carrier-protein] synthase (126 aa).

2 residues coordinate Mg(2+): aspartate 9 and glutamate 58.

The protein belongs to the P-Pant transferase superfamily. AcpS family. Mg(2+) is required as a cofactor.

It is found in the cytoplasm. It catalyses the reaction apo-[ACP] + CoA = holo-[ACP] + adenosine 3',5'-bisphosphate + H(+). Its function is as follows. Transfers the 4'-phosphopantetheine moiety from coenzyme A to a Ser of acyl-carrier-protein. The protein is Holo-[acyl-carrier-protein] synthase of Aliivibrio fischeri (strain MJ11) (Vibrio fischeri).